Here is a 205-residue protein sequence, read N- to C-terminus: Proteasome subunit beta type-3 (205 aa).

Ser2 carries the N-acetylserine modification. Lys77 is modified (N6-acetyllysine).

It belongs to the peptidase T1B family. The 26S proteasome consists of a 20S proteasome core and two 19S regulatory subunits. The 20S proteasome core is a barrel-shaped complex made of 28 subunits that are arranged in four stacked rings. The two outer rings are each formed by seven alpha subunits, and the two inner rings are formed by seven beta subunits. The proteolytic activity is exerted by three beta-subunits PSMB5, PSMB6 and PSMB7.

It localises to the cytoplasm. It is found in the nucleus. Its function is as follows. Non-catalytic component of the 20S core proteasome complex involved in the proteolytic degradation of most intracellular proteins. This complex plays numerous essential roles within the cell by associating with different regulatory particles. Associated with two 19S regulatory particles, forms the 26S proteasome and thus participates in the ATP-dependent degradation of ubiquitinated proteins. The 26S proteasome plays a key role in the maintenance of protein homeostasis by removing misfolded or damaged proteins that could impair cellular functions, and by removing proteins whose functions are no longer required. Associated with the PA200 or PA28, the 20S proteasome mediates ubiquitin-independent protein degradation. This type of proteolysis is required in several pathways including spermatogenesis (20S-PA200 complex) or generation of a subset of MHC class I-presented antigenic peptides (20S-PA28 complex). This chain is Proteasome subunit beta type-3 (Psmb3), found in Rattus norvegicus (Rat).